Consider the following 207-residue polypeptide: dITP/XTP pyrophosphatase (207 aa).

Position 11 to 16 (11 to 16) interacts with substrate; that stretch reads TGNPGK. Asp-72 functions as the Proton acceptor in the catalytic mechanism. Asp-72 provides a ligand contact to Mg(2+). Substrate contacts are provided by residues Ser-73, 154-157, Lys-177, and 182-183; these read FGYD and HR.

This sequence belongs to the HAM1 NTPase family. Homodimer. Requires Mg(2+) as cofactor.

The enzyme catalyses XTP + H2O = XMP + diphosphate + H(+). The catalysed reaction is dITP + H2O = dIMP + diphosphate + H(+). It catalyses the reaction ITP + H2O = IMP + diphosphate + H(+). Pyrophosphatase that catalyzes the hydrolysis of nucleoside triphosphates to their monophosphate derivatives, with a high preference for the non-canonical purine nucleotides XTP (xanthosine triphosphate), dITP (deoxyinosine triphosphate) and ITP. Seems to function as a house-cleaning enzyme that removes non-canonical purine nucleotides from the nucleotide pool, thus preventing their incorporation into DNA/RNA and avoiding chromosomal lesions. The sequence is that of dITP/XTP pyrophosphatase from Thermus thermophilus (strain ATCC 27634 / DSM 579 / HB8).